Reading from the N-terminus, the 452-residue chain is Caspase-2 (452 aa).

Position 2 is an N-acetylalanine (Ala2). Positions 2–169 (AASSGRSQSS…TMEHSLDNGD (168 aa)) are excised as a propeptide. In terms of domain architecture, CARD spans 32–121 (MHPDHQETLK…GHLEDLLLTT (90 aa)). At Ser157 the chain carries Phosphoserine. Active-site residues include His277 and Cys320. Positions 326–333 (DRGVDQQD) are excised as a propeptide. Over residues 327–336 (RGVDQQDGKN) the composition is skewed to basic and acidic residues. Residues 327-349 (RGVDQQDGKNHAQSPGCEESDAG) form a disordered region. Ser340 is modified (phosphoserine).

Belongs to the peptidase C14A family. As to quaternary structure, heterotetramer that consists of two anti-parallel arranged heterodimers, each one formed by a p18 subunit and a p12 subunit. Forms a complex named the PIDDosome with PIDD1 and CRADD. Interacts with NOL3 (via CARD domain); inhibits CASP2 activity in a phosphorylation-dependent manner. In terms of processing, the mature protease can process its own propeptide, but not that of other caspases.

It catalyses the reaction Strict requirement for an Asp residue at P1, with 316-Asp being essential for proteolytic activity and has a preferred cleavage sequence of Val-Asp-Val-Ala-Asp-|-.. In terms of biological role, involved in the activation cascade of caspases responsible for apoptosis execution. Might function by either activating some proteins required for cell death or inactivating proteins necessary for cell survival. Associates with PIDD1 and CRADD to form the PIDDosome, a complex that activates CASP2 and triggers apoptosis in response to genotoxic stress. In Rattus norvegicus (Rat), this protein is Caspase-2 (Casp2).